The primary structure comprises 134 residues: ATP synthase epsilon chain (134 aa).

It belongs to the ATPase epsilon chain family. As to quaternary structure, F-type ATPases have 2 components, CF(1) - the catalytic core - and CF(0) - the membrane proton channel. CF(1) has five subunits: alpha(3), beta(3), gamma(1), delta(1), epsilon(1). CF(0) has three main subunits: a, b and c. In this bacterium the a and b subunits are transcribed but do not seem to be translated, thus the ATP synthase consists of the alpha, beta, gamma, delta, epsilon and c subunits.

The protein localises to the cell membrane. Functionally, produces ATP from ADP in the presence of a proton gradient across the membrane. In Moorella thermoacetica (strain ATCC 39073 / JCM 9320), this protein is ATP synthase epsilon chain.